Consider the following 312-residue polypeptide: Very-long-chain 3-oxoacyl-CoA reductase-like protein At1g24470 (312 aa).

Residues 14–34 traverse the membrane as a helical segment; sequence LHFVCFIGFLFLLRVLFIPLL. Residue 52 to 81 participates in NADP(+) binding; sequence GSWAMVTGATEGIGRAFAHELAKHGLNLIL. Ser190 lines the substrate pocket. The active-site Proton acceptor is the Tyr205.

The protein belongs to the short-chain dehydrogenases/reductases (SDR) family. As to expression, expressed in green siliques, flowers, inflorescence stems and leaves. Not detected in roots.

It is found in the endoplasmic reticulum membrane. In terms of biological role, probable reductase, but unlike KCR1, has no beta-ketoacyl-coenzyme A reductase activity. This chain is Very-long-chain 3-oxoacyl-CoA reductase-like protein At1g24470 (KCR2), found in Arabidopsis thaliana (Mouse-ear cress).